The sequence spans 307 residues: Beta-lactamase (307 aa).

Positions 1–34 (MRNRGFGRRELLVAMAMLVSVTGCARHASGARPA) form a signal peptide, tat-type signal. The Acyl-ester intermediate role is filled by Ser84. Substrate is bound at residue Ser142. The active-site Proton acceptor is Glu182. Residue 251–253 (TGT) participates in substrate binding.

It belongs to the class-A beta-lactamase family. In terms of assembly, monomer. Post-translationally, exported by the Tat system. The position of the signal peptide cleavage has not been experimentally proven.

It is found in the periplasm. It localises to the secreted. It carries out the reaction a beta-lactam + H2O = a substituted beta-amino acid. Is inhibited by clavulanate. Functionally, extended spectrum beta-lactamase (ESBL) that inactivates beta-lactam antibiotics by hydrolyzing the amide group of the beta-lactam ring. Displays high levels of penicillinase and cephalosporinase activity as well as measurable activity with carbapenems, including imipenem and meropenem. Plays a primary role in the intrinsic resistance of mycobacteria to beta-lactam antibiotics. The sequence is that of Beta-lactamase (blaC) from Mycobacterium bovis (strain ATCC BAA-935 / AF2122/97).